A 620-amino-acid polypeptide reads, in one-letter code: Apoptosis regulator MC163R (620 aa).

Residues 113–133 traverse the membrane as a helical segment; it reads APLPLLLLPLLLPPMILLFFL.

It localises to the host mitochondrion. Its subcellular location is the host membrane. Functionally, plays a role in the inhibition of host apoptosis. Prevents host TNF-alpha-induced mitochondrial membrane permeabilization and reduces caspase-3/CASP3 and PARP1 cleavage induced by the intrinsic apoptotic pathway. The polypeptide is Apoptosis regulator MC163R (MC163R) (Homo sapiens (Human)).